The following is an 871-amino-acid chain: Coatomer subunit gamma-2 (871 aa).

Over residues 1–11 the composition is skewed to basic and acidic residues; it reads MIKKFDKKDEE. The segment at 1 to 21 is disordered; that stretch reads MIKKFDKKDEESGSGSNPFQH. HEAT repeat units follow at residues 64–101, 283–320, 321–355, 356–392, 395–430, and 467–504; these read TEATEAFFAMTRLFQSNDQTLRRMCYLTIKEMATISED, RELAPAVSVLQLFCSSPKPALRYAAVRTLNKVAMKHPS, AVTACNLDLENLITDSNRSIATLAITTLLKTGSES, SVDRLMKQISSFVSEISDEFKVVVVQAISALCQKYPR, SVMMTFLSNMLRDDGGFEYKRAIVDCIISIVEENPE, and PVPSKYIRFIFNRVVLENEAVRAAAVSALAKFGAQNES. Thr594 is subject to Phosphothreonine.

Belongs to the COPG family. Oligomeric complex. Binds to CDC42. Interacts with JAGN1. Interacts with TMED10 (via cytoplasmic domain).

The protein resides in the cytoplasm. Its subcellular location is the cytosol. The protein localises to the golgi apparatus membrane. It is found in the cytoplasmic vesicle. It localises to the COPI-coated vesicle membrane. In terms of biological role, the coatomer is a cytosolic protein complex that binds to dilysine motifs and reversibly associates with Golgi non-clathrin-coated vesicles, which further mediate biosynthetic protein transport from the ER, via the Golgi up to the trans Golgi network. Coatomer complex is required for budding from Golgi membranes, and is essential for the retrograde Golgi-to-ER transport of dilysine-tagged proteins. In mammals, the coatomer can only be recruited by membranes associated to ADP-ribosylation factors (ARFs), which are small GTP-binding proteins; the complex also influences the Golgi structural integrity, as well as the processing, activity, and endocytic recycling of LDL receptors. The protein is Coatomer subunit gamma-2 (COPG2) of Homo sapiens (Human).